The primary structure comprises 202 residues: Ras-related protein Rab-18 (202 aa).

The GTP site is built by Ser-18, Gly-21, Lys-22, Ser-23, Ser-24, Asp-35, Pro-36, Thr-41, Gly-67, Lys-124, Asp-126, and Ala-153. Positions 38 to 46 (QAATIGVDF) match the Effector region motif. S-geranylgeranyl cysteine attachment occurs at residues Cys-198 and Cys-200.

This sequence belongs to the small GTPase superfamily. Rab family.

Its subcellular location is the cell membrane. The catalysed reaction is GTP + H2O = GDP + phosphate + H(+). The small GTPases Rab are key regulators of intracellular membrane trafficking, from the formation of transport vesicles to their fusion with membranes. Rabs cycle between an inactive GDP-bound form and an active GTP-bound form that is able to recruit to membranes different sets of downstream effectors directly responsible for vesicle formation, movement, tethering and fusion. The sequence is that of Ras-related protein Rab-18 (RAB18A) from Lymnaea stagnalis (Great pond snail).